Here is a 229-residue protein sequence, read N- to C-terminus: 2-C-methyl-D-erythritol 4-phosphate cytidylyltransferase (229 aa).

Belongs to the IspD/TarI cytidylyltransferase family. IspD subfamily.

It carries out the reaction 2-C-methyl-D-erythritol 4-phosphate + CTP + H(+) = 4-CDP-2-C-methyl-D-erythritol + diphosphate. It functions in the pathway isoprenoid biosynthesis; isopentenyl diphosphate biosynthesis via DXP pathway; isopentenyl diphosphate from 1-deoxy-D-xylulose 5-phosphate: step 2/6. In terms of biological role, catalyzes the formation of 4-diphosphocytidyl-2-C-methyl-D-erythritol from CTP and 2-C-methyl-D-erythritol 4-phosphate (MEP). In Clostridium botulinum (strain Langeland / NCTC 10281 / Type F), this protein is 2-C-methyl-D-erythritol 4-phosphate cytidylyltransferase.